The chain runs to 96 residues: Protein C4 (96 aa).

The N-myristoyl glycine; by host moiety is linked to residue G2. The tract at residues 66 to 96 is disordered; the sequence is STDDLQGEDSRQPMTLTPRQLTQDVSRRLLM. Residues 77–89 are compositionally biased toward polar residues; sequence QPMTLTPRQLTQD.

Belongs to the geminiviridae protein AC4/C4 family.

It is found in the host cell membrane. Pathogenicity determinant. May act as a suppressor of RNA-mediated gene silencing, also known as post-transcriptional gene silencing (PTGS), a mechanism of plant viral defense that limits the accumulation of viral RNAs. This chain is Protein C4, found in Solanum lycopersicum (Tomato).